Here is an 839-residue protein sequence, read N- to C-terminus: Probable beta-glucosidase I (839 aa).

An N-linked (GlcNAc...) asparagine glycan is attached at N197. D225 is an active-site residue. Residues 395 to 555 enclose the PA14 domain; that stretch reads DGKTGFSFKV…GQEELISNAV (161 aa). Residue N620 is glycosylated (N-linked (GlcNAc...) asparagine).

Belongs to the glycosyl hydrolase 3 family.

It is found in the secreted. It carries out the reaction Hydrolysis of terminal, non-reducing beta-D-glucosyl residues with release of beta-D-glucose.. It functions in the pathway glycan metabolism; cellulose degradation. Functionally, beta-glucosidases are one of a number of cellulolytic enzymes involved in the degradation of cellulosic biomass. Catalyzes the last step releasing glucose from the inhibitory cellobiose. In Aspergillus flavus (strain ATCC 200026 / FGSC A1120 / IAM 13836 / NRRL 3357 / JCM 12722 / SRRC 167), this protein is Probable beta-glucosidase I (bglI).